Reading from the N-terminus, the 510-residue chain is Sphingolipid C9-methyltransferase B (510 aa).

Residue Asn-55 is glycosylated (N-linked (GlcNAc...) asparagine). A run of 2 helical transmembrane segments spans residues Leu-62–Ala-82 and Thr-84–Ala-104. N-linked (GlcNAc...) asparagine glycosylation is present at Asn-175. Residues Tyr-227–Thr-228, Met-264–Gly-272, Thr-290–Gln-295, and Tyr-320–Arg-321 each bind S-adenosyl-L-methionine. The N-linked (GlcNAc...) asparagine glycan is linked to Asn-294.

It belongs to the CFA/CMAS family.

The protein localises to the membrane. It catalyses the reaction a (4E,8E)-4-sphinga-4,8-dienine ceramide + S-adenosyl-L-methionine = a 9-methyl-(4E,8E)-sphinga-4,8-dienine ceramide + S-adenosyl-L-homocysteine + H(+). Its pathway is lipid metabolism; sphingolipid metabolism. In terms of biological role, catalyzes methylation of the sphingoid base component of glucosylceramides (GluCers) at the C9-position. Sphingolipid C9-methylation requires 4,8-desaturated ceramides as substrates. Glucosylceramides play important roles in growth, differentiation and pathogenicity. The methyl group at the C9-position distinguishes fungal glucosylceramides from those of plants and animals and may thus play a role in host-pathogen interactions enabling the host to recognize the fungal attack and initiate specific defense responses. The protein is Sphingolipid C9-methyltransferase B of Emericella nidulans (strain FGSC A4 / ATCC 38163 / CBS 112.46 / NRRL 194 / M139) (Aspergillus nidulans).